A 212-amino-acid polypeptide reads, in one-letter code: Cytidylate kinase (212 aa).

7 to 15 (GPAASGKGT) is an ATP binding site.

It belongs to the cytidylate kinase family. Type 1 subfamily.

The protein localises to the cytoplasm. The catalysed reaction is CMP + ATP = CDP + ADP. It catalyses the reaction dCMP + ATP = dCDP + ADP. The sequence is that of Cytidylate kinase from Nitrobacter winogradskyi (strain ATCC 25391 / DSM 10237 / CIP 104748 / NCIMB 11846 / Nb-255).